Here is a 624-residue protein sequence, read N- to C-terminus: Hemocyanin E chain (624 aa).

Residues His-169, His-173, His-200, His-320, His-324, and His-360 each coordinate Cu cation. Residue Asn-445 is glycosylated (N-linked (GlcNAc...) asparagine). Cys-529 and Cys-577 are oxidised to a cystine.

It belongs to the tyrosinase family. Hemocyanin subfamily. Tarantula hemocyanin is a 24-chain polymer with seven different chains identified. Hemolymph.

Its subcellular location is the secreted. It localises to the extracellular space. Its function is as follows. Hemocyanins are copper-containing oxygen carriers occurring freely dissolved in the hemolymph of many mollusks and arthropods. The chain is Hemocyanin E chain (HCE) from Aphonopelma sp. (American tarantula).